A 411-amino-acid polypeptide reads, in one-letter code: Putative BMP-2-inducible kinase-like protein (411 aa).

Disordered regions lie at residues 1–87, 215–280, and 392–411; these read MIAP…TQDI, SQQQ…RVSQ, and QQSQPVELDPFGAAPFPSKQ. Composition is skewed to basic and acidic residues over residues 8–18 and 53–68; these read SSEEEGQKDEE and EKRSSDSDYEQAKAKY. Residues 47-71 adopt a coiled-coil conformation; that stretch reads EDEEEEEKRSSDSDYEQAKAKYSDM. Composition is skewed to basic residues over residues 220–234 and 243–258; these read VKQRSLQKLSSRQRR and NGKRHHGTPTSKKKTL.

The sequence is that of Putative BMP-2-inducible kinase-like protein (BMP2KL) from Homo sapiens (Human).